The chain runs to 99 residues: Nucleoid-associated protein str1598 (99 aa).

The protein belongs to the YbaB/EbfC family. In terms of assembly, homodimer.

It localises to the cytoplasm. The protein resides in the nucleoid. Functionally, binds to DNA and alters its conformation. May be involved in regulation of gene expression, nucleoid organization and DNA protection. This chain is Nucleoid-associated protein str1598, found in Streptococcus thermophilus (strain CNRZ 1066).